We begin with the raw amino-acid sequence, 352 residues long: Sodium-lithium/proton antiporter (352 aa).

8 consecutive transmembrane segments (helical) span residues 11–31, 32–52, 61–81, 159–179, 216–236, 241–261, 271–291, and 317–337; these read ILLL…PVSV, PLII…WMQF, AVTI…TYAV, IPEY…FMLE, AQFL…FWIT, IVMS…SIVI, IVGD…LLAI, and IGLQ…VIAF.

Belongs to the autoinducer-2 exporter (AI-2E) (TC 2.A.86) family.

The protein resides in the cell membrane. Functionally, catalyzes the pH-dependent efflux of sodium and lithium in exchange for external protons. This is Sodium-lithium/proton antiporter from Halobacillus andaensis.